The following is an 87-amino-acid chain: Small ribosomal subunit protein bS20 (87 aa).

The tract at residues 67–87 is disordered; that stretch reads HKNNGSRKASRLDAYVQSKQQ.

The protein belongs to the bacterial ribosomal protein bS20 family.

Its function is as follows. Binds directly to 16S ribosomal RNA. This Metamycoplasma arthritidis (strain 158L3-1) (Mycoplasma arthritidis) protein is Small ribosomal subunit protein bS20.